The following is a 251-amino-acid chain: uncharacterized protein (251 aa).

One can recognise a Response regulatory domain in the interval 3 to 118 (KVIICDDERI…QLEHILDILV (116 aa)). Asp55 is subject to 4-aspartylphosphate. Residues 152 to 249 (NQILSQIKQH…HMSPSDYNKQ (98 aa)) form the HTH araC/xylS-type domain. DNA-binding regions (H-T-H motif) lie at residues 169-190 (LDLINPIDVSESYAMRTFKEHV) and 216-239 (HYEIAEKVGFSEYKMFCYHFKKYL).

Post-translationally, phosphorylated by SERP2405.

The protein resides in the cytoplasm. Probable member of the two-component regulatory system SERP2405/SERP2406. This is an uncharacterized protein from Staphylococcus epidermidis (strain ATCC 35984 / DSM 28319 / BCRC 17069 / CCUG 31568 / BM 3577 / RP62A).